Consider the following 302-residue polypeptide: MSNTFQDLIMLLQNYWAQQGCTIIQPIDIAVGAGTSHPMTCLLALGPEPIATAYVQPSRRPTDGRYGNNPNRLQHYYQFQVILKPSPHNIQEIYLDSLKQIGLDPTLNDIRFVEDNWENQTLGAWGLGWEVWLNGMEVTQFTYFQQVGGLECQIVAGEITYGLERIAMHLQNVENVFDLRWNKGAFGYITYGDIFLQNEVEQSTYNFEYADANLLLNCFDFYEKEAQKLLALDKPLPLPAYECVLKAVHNFNMLEARKAISVIERQCYILRLRTLTKAVAQAYYISRQSLGFPMCKRHKKRR.

Belongs to the class-II aminoacyl-tRNA synthetase family. In terms of assembly, tetramer of two alpha and two beta subunits.

It localises to the cytoplasm. The enzyme catalyses tRNA(Gly) + glycine + ATP = glycyl-tRNA(Gly) + AMP + diphosphate. The chain is Glycine--tRNA ligase alpha subunit from Baumannia cicadellinicola subsp. Homalodisca coagulata.